The following is a 109-amino-acid chain: Iron-sulfur cluster assembly protein CyaY (109 aa).

Belongs to the frataxin family.

Involved in iron-sulfur (Fe-S) cluster assembly. May act as a regulator of Fe-S biogenesis. The polypeptide is Iron-sulfur cluster assembly protein CyaY (Burkholderia lata (strain ATCC 17760 / DSM 23089 / LMG 22485 / NCIMB 9086 / R18194 / 383)).